The following is a 285-amino-acid chain: Chitinase 4 (285 aa).

The signal sequence occupies residues 1–27 (MAAKMATMVALVFGLALLLSAAAPAAA). Residues 28 to 62 (QNCGCQDGYCCSQWGYCGTTEAYCGQGCQSGPCWG) form the Chitin-binding type-1 domain. 7 disulfide bridges follow: Cys-30–Cys-38, Cys-32–Cys-44, Cys-37–Cys-51, Cys-55–Cys-60, Cys-104–Cys-153, Cys-166–Cys-175, and Cys-253–Cys-285. Catalysis depends on Glu-148, which acts as the Proton donor.

The protein belongs to the glycosyl hydrolase 19 family. Chitinase class IV subfamily. As to expression, expressed at low levels in leaves, sheaths and meristems.

The catalysed reaction is Random endo-hydrolysis of N-acetyl-beta-D-glucosaminide (1-&gt;4)-beta-linkages in chitin and chitodextrins.. In terms of biological role, hydrolyzes chitin and may function in reproductive organs during embryogenesis and seed maturation. In Oryza sativa subsp. japonica (Rice), this protein is Chitinase 4 (Cht4).